The primary structure comprises 268 residues: Small ribosomal subunit protein eS1 (268 aa).

This sequence belongs to the eukaryotic ribosomal protein eS1 family. As to quaternary structure, component of the small ribosomal subunit. Mature ribosomes consist of a small (40S) and a large (60S) subunit. The 40S subunit contains about 33 different proteins and 1 molecule of RNA (18S). The 60S subunit contains about 49 different proteins and 3 molecules of RNA (28S, 5.8S and 5S).

The protein localises to the cytoplasm. This is Small ribosomal subunit protein eS1 from Artemia franciscana (Brine shrimp).